The sequence spans 350 residues: Transmembrane protein 115 (350 aa).

Over 1–19 (MQRALPGARQHLGAILASA) the chain is Cytoplasmic. The segment at 1–205 (MQRALPGARQ…FGLLSSWVYL (205 aa)) is mediates homooligomerization. Residues 20–40 (SVVVKALCAVVLFLYLLSFAV) form a helical membrane-spanning segment. Residues 41–97 (DTGCLAVTPGYLFPPNFWIWTLATHGLMEQHVWDVAISLATVVVAGRLLEPLWGALE) lie on the Lumenal side of the membrane. Residues 98 to 118 (LLIFFSVVNVSVGLLGALAYL) traverse the membrane as a helical segment. Topologically, residues 119–126 (LTYMASFN) are cytoplasmic. A helical membrane pass occupies residues 127-147 (LVYLFTIRIHGALGFLGGVLV). The Lumenal portion of the chain corresponds to 148–165 (ALKQTMGDCVVLRVPQVR). Residues 166 to 186 (VSVVPMLLLALLLLLRLATLL) form a helical membrane-spanning segment. Residues 187–350 (QSPALASYGF…LITLETAPLL (164 aa)) lie on the Cytoplasmic side of the membrane. Residues 206–229 (RFYQRHSRGRGDMADHFAFATFFP) form a mediates localization to the Golgi region. Residues 299-350 (EDQSAWPSMDDDEEEAGAKTDSPLPLEEASTPPGKVTVPESSLITLETAPLL) form a disordered region. Phosphothreonine is present on Thr-329.

Belongs to the TMEM115 family. As to quaternary structure, homooligomer. Interacts with COPB1. May interact with LMAN1. Interacts with the COG complex; probably through COG3.

It localises to the golgi apparatus. The protein localises to the golgi stack membrane. Its function is as follows. May play a role in retrograde transport of proteins from the Golgi to the endoplasmic reticulum. May indirectly play a role in protein glycosylation in the Golgi. The polypeptide is Transmembrane protein 115 (Mus musculus (Mouse)).